Here is a 285-residue protein sequence, read N- to C-terminus: Secreted RxLR effector protein 106 (285 aa).

A signal peptide spans 1–24 (MSVRYAGLLLAAVAVSAHINEVNS). Positions 42-54 (RDLRSADNGNEER) match the RxLR-dEER motif. N-linked (GlcNAc...) asparagine glycosylation is found at Asn-182 and Asn-187. The segment covering 220–229 (IEGDKEKKGG) has biased composition (basic and acidic residues). The disordered stretch occupies residues 220 to 262 (IEGDKEKKGGPDYVEGTESRGKKRGQTEAPDLEPGLTPKQKRL). The Bipartite nuclear localization signal signature appears at 239 to 264 (RGKKRGQTEAPDLEPGLTPKQKRLKR).

Belongs to the RxLR effector family. As to quaternary structure, interacts with host RCD1 and SRO1 transcription co-regulators.

It localises to the secreted. Its subcellular location is the host nucleus. Secreted effector that suppresses pathogen-associated molecular pattern (PAMP)-triggered immunity (PTI) in host plants. Binds to RCD1 and SRO1 transcription co-regulators to attenuate transcriptional activation of salicylic acid (SA)-induced defense genes and alters plant growth responses to light. Suppresses SA signal transduction but not SA levels. The protein is Secreted RxLR effector protein 106 of Hyaloperonospora arabidopsidis (strain Emoy2) (Downy mildew agent).